Consider the following 383-residue polypeptide: Arginine biosynthesis bifunctional protein ArgJ (383 aa).

The substrate site is built by T146, K168, T179, E259, N378, and S383. Residue T179 is the Nucleophile of the active site.

Belongs to the ArgJ family. As to quaternary structure, heterotetramer of two alpha and two beta chains.

It is found in the cytoplasm. It carries out the reaction N(2)-acetyl-L-ornithine + L-glutamate = N-acetyl-L-glutamate + L-ornithine. The enzyme catalyses L-glutamate + acetyl-CoA = N-acetyl-L-glutamate + CoA + H(+). Its pathway is amino-acid biosynthesis; L-arginine biosynthesis; L-ornithine and N-acetyl-L-glutamate from L-glutamate and N(2)-acetyl-L-ornithine (cyclic): step 1/1. It functions in the pathway amino-acid biosynthesis; L-arginine biosynthesis; N(2)-acetyl-L-ornithine from L-glutamate: step 1/4. Catalyzes two activities which are involved in the cyclic version of arginine biosynthesis: the synthesis of N-acetylglutamate from glutamate and acetyl-CoA as the acetyl donor, and of ornithine by transacetylation between N(2)-acetylornithine and glutamate. This chain is Arginine biosynthesis bifunctional protein ArgJ, found in Streptomyces avermitilis (strain ATCC 31267 / DSM 46492 / JCM 5070 / NBRC 14893 / NCIMB 12804 / NRRL 8165 / MA-4680).